The sequence spans 157 residues: S-ribosylhomocysteine lyase (157 aa).

Residues His54, His58, and Cys126 each coordinate Fe cation.

It belongs to the LuxS family. In terms of assembly, homodimer. It depends on Fe cation as a cofactor.

It catalyses the reaction S-(5-deoxy-D-ribos-5-yl)-L-homocysteine = (S)-4,5-dihydroxypentane-2,3-dione + L-homocysteine. In terms of biological role, involved in the synthesis of autoinducer 2 (AI-2) which is secreted by bacteria and is used to communicate both the cell density and the metabolic potential of the environment. The regulation of gene expression in response to changes in cell density is called quorum sensing. Catalyzes the transformation of S-ribosylhomocysteine (RHC) to homocysteine (HC) and 4,5-dihydroxy-2,3-pentadione (DPD). The protein is S-ribosylhomocysteine lyase of Bacillus licheniformis (strain ATCC 14580 / DSM 13 / JCM 2505 / CCUG 7422 / NBRC 12200 / NCIMB 9375 / NCTC 10341 / NRRL NRS-1264 / Gibson 46).